A 593-amino-acid polypeptide reads, in one-letter code: ATPase family AAA domain-containing protein 3-A (593 aa).

Residues 1 to 64 (MSWLFGLNKG…AKAARELDQS (64 aa)) are disordered. The Mitochondrial intermembrane portion of the chain corresponds to 1–242 (MSWLFGLNKG…FRTFISDWDK (242 aa)). Residues 15-27 (PGVPGFPEPPSPP) show a composition bias toward pro residues. Composition is skewed to basic and acidic residues over residues 33 to 44 (GGDKNKPKDKWS) and 53 to 64 (RAAKAARELDQS). Residues 52-215 (ERAAKAAREL…QIRLKAAEHR (164 aa)) adopt a coiled-coil conformation. A helical transmembrane segment spans residues 243–260 (VTATVAGLTLLAVGVYTA). Residues 261-593 (KNATGVAGRY…LQPLLEGTQV (333 aa)) lie on the Mitochondrial matrix side of the membrane. 348-355 (GPPGTGKT) serves as a coordination point for ATP.

It belongs to the AAA ATPase family. Can form homooligomers. Homodimer formation at the N-terminus may be regulated by ATP and is required for the interaction with the inner surface of the mitochondrial outer membrane and correct mitochondrial homeostasis.

It is found in the mitochondrion inner membrane. Its subcellular location is the mitochondrion matrix. It localises to the mitochondrion nucleoid. The enzyme catalyses ATP + H2O = ADP + phosphate + H(+). In terms of biological role, essential for mitochondrial network organization, mitochondrial metabolism and cell growth at organism and cellular level. May play an important role in mitochondrial protein synthesis. May also participate in mitochondrial DNA replication. May bind to mitochondrial DNA D-loops and contribute to nucleoid stability. Required for enhanced channeling of cholesterol for hormone-dependent steroidogenesis. Involved in mitochondrial-mediated antiviral innate immunity. Required to protect mitochondria from the PERK-mediated unfolded protein response: specifically inhibits the activity of EIF2AK3/PERK at mitochondria-endoplasmic reticulum contact sites, thereby providing a safe haven for mitochondrial protein translation during endoplasmic reticulum stress. Ability to inhibit EIF2AK3/PERK is independent of its ATPase activity. Also involved in the mitochondrial DNA damage response by promoting signaling between damaged genomes and the mitochondrial membrane, leading to activation of the integrated stress response (ISR). The polypeptide is ATPase family AAA domain-containing protein 3-A (atad3-a) (Xenopus laevis (African clawed frog)).